Here is a 401-residue protein sequence, read N- to C-terminus: Rab-interacting lysosomal protein (401 aa).

The RH1 domain maps to 11–101 (PGWGSREAAG…REENERLRRE (91 aa)). The stretch at 75–181 (DSLQVSAQPA…AQDRERERQQ (107 aa)) forms a coiled coil. Disordered stretches follow at residues 167–239 (TQLR…SEAG) and 304–388 (KMLG…SALH). Over residues 172-181 (AQDRERERQQ) the composition is skewed to basic and acidic residues. Residues 240 to 316 (QCRFSREEFE…GTPEEAESSE (77 aa)) form the RH2 domain. The necessary for interaction with RAB7A and RAB34, lysosomal distribution and morphology stretch occupies residues 272–333 (FQRELLTDHR…LLSDDKGDHP (62 aa)). A Phosphothreonine modification is found at T308. Residues 310–319 (EEAESSEDEA) show a composition bias toward acidic residues. 2 positions are modified to phosphoserine: S314 and S315.

As to quaternary structure, homodimer. Interacts with RAB7A. Interacts with RAB34. Identified in a complex with MREG and DCTN1; interacts directly with MREG. Interacts with CLN3. Interacts with FLCN; the interaction is direct and promotes association between RILP and RAB34. In terms of tissue distribution, ubiquitous. Strongly expressed in fetal heart, heart, stomach, spleen, adrenal gland, thyroid gland, salivary gland, fetal liver, liver and lung. Poorly expressed in brain.

It localises to the late endosome membrane. Its subcellular location is the lysosome membrane. The protein resides in the cytoplasmic vesicle. The protein localises to the phagosome membrane. In terms of biological role, rab effector playing a role in late endocytic transport to degradative compartments. Involved in the regulation of lysosomal morphology and distribution. Induces recruitment of dynein-dynactin motor complexes to Rab7A-containing late endosome and lysosome compartments. Promotes centripetal migration of phagosomes and the fusion of phagosomes with the late endosomes and lysosomes. The polypeptide is Rab-interacting lysosomal protein (RILP) (Homo sapiens (Human)).